The sequence spans 477 residues: Bifunctional protein HldE (477 aa).

The interval 1–318 is ribokinase; it reads MKVNLPAFER…ENAVRGRAAT (318 aa). 195–198 provides a ligand contact to ATP; the sequence is NLSE. The active site involves Asp-264. Residues 344-477 form a cytidylyltransferase region; it reads MTNGVFDILH…IKKIQTESEK (134 aa).

This sequence in the N-terminal section; belongs to the carbohydrate kinase PfkB family. In the C-terminal section; belongs to the cytidylyltransferase family. Homodimer.

It catalyses the reaction D-glycero-beta-D-manno-heptose 7-phosphate + ATP = D-glycero-beta-D-manno-heptose 1,7-bisphosphate + ADP + H(+). It carries out the reaction D-glycero-beta-D-manno-heptose 1-phosphate + ATP + H(+) = ADP-D-glycero-beta-D-manno-heptose + diphosphate. The protein operates within nucleotide-sugar biosynthesis; ADP-L-glycero-beta-D-manno-heptose biosynthesis; ADP-L-glycero-beta-D-manno-heptose from D-glycero-beta-D-manno-heptose 7-phosphate: step 1/4. It participates in nucleotide-sugar biosynthesis; ADP-L-glycero-beta-D-manno-heptose biosynthesis; ADP-L-glycero-beta-D-manno-heptose from D-glycero-beta-D-manno-heptose 7-phosphate: step 3/4. Its function is as follows. Catalyzes the phosphorylation of D-glycero-D-manno-heptose 7-phosphate at the C-1 position to selectively form D-glycero-beta-D-manno-heptose-1,7-bisphosphate. In terms of biological role, catalyzes the ADP transfer from ATP to D-glycero-beta-D-manno-heptose 1-phosphate, yielding ADP-D-glycero-beta-D-manno-heptose. The polypeptide is Bifunctional protein HldE (Salmonella arizonae (strain ATCC BAA-731 / CDC346-86 / RSK2980)).